Here is a 165-residue protein sequence, read N- to C-terminus: Chorismate pyruvate-lyase (165 aa).

Arginine 77, leucine 115, and glutamate 156 together coordinate substrate.

This sequence belongs to the UbiC family. In terms of assembly, monomer.

The protein resides in the cytoplasm. The enzyme catalyses chorismate = 4-hydroxybenzoate + pyruvate. It functions in the pathway cofactor biosynthesis; ubiquinone biosynthesis. Removes the pyruvyl group from chorismate, with concomitant aromatization of the ring, to provide 4-hydroxybenzoate (4HB) for the ubiquinone pathway. This is Chorismate pyruvate-lyase from Salmonella typhi.